The primary structure comprises 516 residues: Protein BTN1 (516 aa).

Transmembrane regions (helical) follow at residues 24–44, 57–77, 88–108, 112–132, 146–166, 169–189, 371–391, and 409–429; these read LFAA…IILS, GVVA…WPLL, VGFC…SSSL, LLGI…FLQL, LGAW…IWWL, GLGV…FPIT, PAII…TFFF, and SITI…SGYV.

The protein belongs to the battenin family.

It is found in the vacuole membrane. In terms of biological role, involved in vacuolar transport and vacuole pH homeostasis. Also required for cytokinesis. The chain is Protein BTN1 (BTN1) from Cryptococcus neoformans var. neoformans serotype D (strain JEC21 / ATCC MYA-565) (Filobasidiella neoformans).